The primary structure comprises 197 residues: Proteasome subunit beta 1 (197 aa).

Residues 1–6 (MNRKTG) constitute a propeptide, removed in mature form; by autocatalysis. Residue threonine 7 is the Nucleophile of the active site.

Belongs to the peptidase T1B family. The 20S proteasome core is composed of 14 alpha and 14 beta subunits that assemble into four stacked heptameric rings, resulting in a barrel-shaped structure. The two inner rings, each composed of seven catalytic beta subunits, are sandwiched by two outer rings, each composed of seven alpha subunits. The catalytic chamber with the active sites is on the inside of the barrel. Has a gated structure, the ends of the cylinder being occluded by the N-termini of the alpha-subunits. Is capped at one or both ends by the proteasome regulatory ATPase, PAN.

The protein localises to the cytoplasm. The catalysed reaction is Cleavage of peptide bonds with very broad specificity.. With respect to regulation, the formation of the proteasomal ATPase PAN-20S proteasome complex, via the docking of the C-termini of PAN into the intersubunit pockets in the alpha-rings, triggers opening of the gate for substrate entry. Interconversion between the open-gate and close-gate conformations leads to a dynamic regulation of the 20S proteasome proteolysis activity. In terms of biological role, component of the proteasome core, a large protease complex with broad specificity involved in protein degradation. This chain is Proteasome subunit beta 1, found in Pyrococcus horikoshii (strain ATCC 700860 / DSM 12428 / JCM 9974 / NBRC 100139 / OT-3).